Here is a 477-residue protein sequence, read N- to C-terminus: Aspartyl/glutamyl-tRNA(Asn/Gln) amidotransferase subunit B (477 aa).

Belongs to the GatB/GatE family. GatB subfamily. As to quaternary structure, heterotrimer of A, B and C subunits.

The enzyme catalyses L-glutamyl-tRNA(Gln) + L-glutamine + ATP + H2O = L-glutaminyl-tRNA(Gln) + L-glutamate + ADP + phosphate + H(+). It carries out the reaction L-aspartyl-tRNA(Asn) + L-glutamine + ATP + H2O = L-asparaginyl-tRNA(Asn) + L-glutamate + ADP + phosphate + 2 H(+). Functionally, allows the formation of correctly charged Asn-tRNA(Asn) or Gln-tRNA(Gln) through the transamidation of misacylated Asp-tRNA(Asn) or Glu-tRNA(Gln) in organisms which lack either or both of asparaginyl-tRNA or glutaminyl-tRNA synthetases. The reaction takes place in the presence of glutamine and ATP through an activated phospho-Asp-tRNA(Asn) or phospho-Glu-tRNA(Gln). This Methylobacillus flagellatus (strain ATCC 51484 / DSM 6875 / VKM B-1610 / KT) protein is Aspartyl/glutamyl-tRNA(Asn/Gln) amidotransferase subunit B.